A 246-amino-acid polypeptide reads, in one-letter code: MRHQDVAIIIPSRLSSTRLKQKPLQLIGSITLIERVFTQVNQAGLEHTYVATDSEEIASVITKVGGKVIFTDSAIPTGTDRTYEAFKLIPNNQNINYIVNVQGDMPFIEPSSILKIIEYLKNSKYDIVTPIVKVDRESVKASSNVTVAVDSAGTALYFSRSLIPNGAEEFLYHVGMYGFRKNALEKFVSLKPTFLEKTERLEQLRVLENGMTIGTCLVENVPISVDTEEDLKKAVKFYENISKLGL.

It belongs to the KdsB family.

It is found in the cytoplasm. It carries out the reaction 3-deoxy-alpha-D-manno-oct-2-ulosonate + CTP = CMP-3-deoxy-beta-D-manno-octulosonate + diphosphate. It functions in the pathway nucleotide-sugar biosynthesis; CMP-3-deoxy-D-manno-octulosonate biosynthesis; CMP-3-deoxy-D-manno-octulosonate from 3-deoxy-D-manno-octulosonate and CTP: step 1/1. The protein operates within bacterial outer membrane biogenesis; lipopolysaccharide biosynthesis. Its function is as follows. Activates KDO (a required 8-carbon sugar) for incorporation into bacterial lipopolysaccharide in Gram-negative bacteria. In Rickettsia africae (strain ESF-5), this protein is 3-deoxy-manno-octulosonate cytidylyltransferase.